Consider the following 630-residue polypeptide: Very-long-chain aldehyde decarbonylase GL1-7 (630 aa).

The next 4 helical transmembrane spans lie at 93–113 (LYLD…YAII), 126–146 (GALI…YWFH), 185–205 (FLLF…SVLA), and 325–345 (VWYM…AWIY). One can recognise a Fatty acid hydroxylase domain in the interval 133–272 (LHMGPVEFLY…MPFYDYIYNT (140 aa)).

The protein belongs to the sterol desaturase family. As to quaternary structure, homodimer. As to expression, expressed in panicles at low levels.

It is found in the endoplasmic reticulum membrane. It carries out the reaction a long-chain fatty aldehyde + 2 NADPH + O2 + H(+) = a long-chain alkane + formate + 2 NADP(+) + H2O. Functionally, aldehyde decarbonylase involved in the conversion of aldehydes to alkanes. Core component of a very-long-chain alkane synthesis complex. The chain is Very-long-chain aldehyde decarbonylase GL1-7 from Oryza sativa subsp. japonica (Rice).